A 177-amino-acid chain; its full sequence is Large ribosomal subunit protein uL6 (177 aa).

Belongs to the universal ribosomal protein uL6 family. Part of the 50S ribosomal subunit.

This protein binds to the 23S rRNA, and is important in its secondary structure. It is located near the subunit interface in the base of the L7/L12 stalk, and near the tRNA binding site of the peptidyltransferase center. This Shewanella denitrificans (strain OS217 / ATCC BAA-1090 / DSM 15013) protein is Large ribosomal subunit protein uL6.